A 113-amino-acid chain; its full sequence is Con-Ins G3b (113 aa).

Residues 1-21 form the signal peptide; sequence MTTSFYFLLVALGLLLYVCQS. A propeptide spanning residues 22 to 29 is cleaved from the precursor; the sequence is SFGNQHTR. P34 is subject to 4-hydroxyproline; partial. 3 disulfide bridges follow: C38/C99, C50/C112, and C98/C103. E41 is subject to 4-carboxyglutamate. At H51 the chain carries Histidine amide. Positions 52-92 are cleaved as a propeptide — c peptide; sequence GKRNDAGKKRGRASPLWQRQGFLSMLKAKRNEAFFLQRDGR. A 4-carboxyglutamate modification is found at E96. P102 carries the 4-hydroxyproline; partial modification.

Belongs to the insulin family. As to quaternary structure, heterodimer of A and B chains; disulfide-linked. In terms of processing, it is noteworthy that in this dimer, in contrast to Con-Ins G1, the chain B is amidated and not the chain A. In terms of tissue distribution, expressed by the venom gland.

It is found in the secreted. This venom insulin, from a fish-hunting cone snail, facilitates prey capture by rapidly inducing hypoglycemic shock. It is one of the smallest known insulin found in nature and lacks the C-terminal segment of the B chain that, in human insulin, mediates engagement of the insulin receptor (INSR) and assembly of the hormone's hexameric storage form. Despite lacking this segment, it both binds and activates human insulin receptor (long isoform (HIR-B)) with only a 10-fold lower potency. In vivo, intraperitoneal injection of this peptide into zebrafish lowers blood glucose with the same potency than human insulin. In addition, when applied to water, this peptide reduces overall locomotor activity of zebrafish larvae, observed as a significant decrease in the percentage of time spent swimming and movement frequency. This is Con-Ins G3b from Conus geographus (Geography cone).